Consider the following 219-residue polypeptide: Ribosome maturation factor RimP (219 aa).

A disordered region spans residues 195 to 219 (EGRIPGDDLGAEPEDVASTETQEKK).

This sequence belongs to the RimP family.

Its subcellular location is the cytoplasm. Functionally, required for maturation of 30S ribosomal subunits. This chain is Ribosome maturation factor RimP, found in Brucella abortus (strain S19).